Here is a 142-residue protein sequence, read N- to C-terminus: Large ribosomal subunit protein uL16 (142 aa).

Belongs to the universal ribosomal protein uL16 family. As to quaternary structure, part of the 50S ribosomal subunit.

In terms of biological role, binds 23S rRNA and is also seen to make contacts with the A and possibly P site tRNAs. The sequence is that of Large ribosomal subunit protein uL16 from Phenylobacterium zucineum (strain HLK1).